The chain runs to 302 residues: MVTPKQIDFSSCVGADNSNGTLSHRRSPRNIPSSKRAASVAEEETMKKKMKMKKKKKKLDPPLIVRIWNEEDELSILKGLVDYRAKTGFNPKIDWDAFCSFLGSSIVERFSKDQVLSKIRKLKRRFHVHSEKINQGNDPKFTRSSDSEAFGFSSMIWGQGDDDGMDKEHEVNGNGAAENRTNESGEEMLKEHEEEVANTELLNENGAAKTTENGTSSGKERHDEDNDDDDELCAVQDAFEAVMSQGLSGYQKKLQLEKLMNLGNGKRRELSDEWKALCVEETRFNIKKLRFSAKLAEAANDS.

Disordered stretches follow at residues 1 to 55 and 158 to 229; these read MVTP…MKKK and GQGD…NDDD. Phosphoserine is present on Ser-27. Over residues 180 to 195 the composition is skewed to basic and acidic residues; sequence RTNESGEEMLKEHEEE. Residues 208 to 217 show a composition bias toward polar residues; that stretch reads AKTTENGTSS. Positions 270-291 are non-canonical leucine-zipper; that stretch reads LSDEWKALCVEETRFNIKKLRF.

This sequence belongs to the GeBP family. Homo- and heterodimers. Interacts with GPL1, GPL2 and GPL3. Interacts with KIN10, KIN11 and FLZ4. Interacts with KIN10 and KIN11 via its N-terminal part. Interacts with GPL1 and GPL3 via its C-terminal part. As to expression, expressed in the apical meristem and young leaf primordia. Not detected in emerging or mature leaves. Detected in the vascular tissues of cotyledons and leaves, in hydathodes and at the base of flowers and siliques, but not in roots.

The protein localises to the nucleus. Its subcellular location is the nucleolus. DNA-binding protein, which specifically recognizes the GL1 enhancer sequence. May be involved in leaf initiation. May play redundant roles with GPL1 and GPL2 in cytokinin responses by regulating the transcript levels of type-A ARR response genes. Involved in stress responses. Plays a repressive role in cell expansion by counteracting the positive role of CPR5 in this process, but does not regulate cell proliferation or endoreduplication. May play a role in plant defense. This Arabidopsis thaliana (Mouse-ear cress) protein is GLABROUS1 enhancer-binding protein.